Here is a 431-residue protein sequence, read N- to C-terminus: 23S rRNA (uracil(1939)-C(5))-methyltransferase RlmD (431 aa).

In terms of domain architecture, TRAM spans 8–68 (KRRVTTRQII…SKYSRGQVKR (61 aa)). [4Fe-4S] cluster-binding residues include Cys81, Cys87, Cys90, and Cys162. S-adenosyl-L-methionine is bound by residues Gln265, Phe294, Asn299, Glu315, Asn342, and Asp363. The active-site Nucleophile is the Cys389.

It belongs to the class I-like SAM-binding methyltransferase superfamily. RNA M5U methyltransferase family. RlmD subfamily.

It catalyses the reaction uridine(1939) in 23S rRNA + S-adenosyl-L-methionine = 5-methyluridine(1939) in 23S rRNA + S-adenosyl-L-homocysteine + H(+). Catalyzes the formation of 5-methyl-uridine at position 1939 (m5U1939) in 23S rRNA. In Enterobacter sp. (strain 638), this protein is 23S rRNA (uracil(1939)-C(5))-methyltransferase RlmD.